Reading from the N-terminus, the 80-residue chain is Exodeoxyribonuclease 7 small subunit (80 aa).

This sequence belongs to the XseB family. As to quaternary structure, heterooligomer composed of large and small subunits.

The protein resides in the cytoplasm. The catalysed reaction is Exonucleolytic cleavage in either 5'- to 3'- or 3'- to 5'-direction to yield nucleoside 5'-phosphates.. Bidirectionally degrades single-stranded DNA into large acid-insoluble oligonucleotides, which are then degraded further into small acid-soluble oligonucleotides. The chain is Exodeoxyribonuclease 7 small subunit from Pseudomonas putida (strain ATCC 700007 / DSM 6899 / JCM 31910 / BCRC 17059 / LMG 24140 / F1).